The primary structure comprises 377 residues: Alanine racemase (377 aa).

Catalysis depends on Lys37, which acts as the Proton acceptor; specific for D-alanine. The residue at position 37 (Lys37) is an N6-(pyridoxal phosphate)lysine. Arg135 contributes to the substrate binding site. Tyr271 functions as the Proton acceptor; specific for L-alanine in the catalytic mechanism. Met319 is a substrate binding site.

The protein belongs to the alanine racemase family. The cofactor is pyridoxal 5'-phosphate.

It carries out the reaction L-alanine = D-alanine. Its pathway is amino-acid biosynthesis; D-alanine biosynthesis; D-alanine from L-alanine: step 1/1. Catalyzes the interconversion of L-alanine and D-alanine. May also act on other amino acids. This chain is Alanine racemase (alr), found in Helicobacter pylori (strain J99 / ATCC 700824) (Campylobacter pylori J99).